The primary structure comprises 339 residues: MVSSQPKYDLIREVGRGSYGVVYEALVRRTSQRVAVKKIRCQAPENVELALREFWALSSIQSQHPNVIHMEECVLQKDGMVQRMLHGSSSVLYLPLVETSLKGEIAFDPRSIYCLWFVMDFCDGGDMNEYILTRRPSRRTNTSFMLQLSSALAFLHKNQIIHRDLKPDNILVCKSRDGVDEPTLKVADFGLSKVCSSSGLNPEEPANVNKSFLSTACGTDFYMAPEVWEGHYTAKADIFALGVILWAMLERITITDTHTKKRLLGGYVQRGAQVVPVGEALLENPKLELLIPVKKKSMNRRMKQLLHQMLSANPQERPDAFQLELKLIQIAFRDYTWET.

In terms of domain architecture, Protein kinase spans 8-332 (YDLIREVGRG…LELKLIQIAF (325 aa)). ATP contacts are provided by residues 14 to 22 (VGRGSYGVV) and lysine 37. The Proton acceptor role is filled by aspartate 164.

It belongs to the protein kinase superfamily. Ser/Thr protein kinase family.

The protein localises to the nucleus. It carries out the reaction L-seryl-[protein] + ATP = O-phospho-L-seryl-[protein] + ADP + H(+). The enzyme catalyses L-threonyl-[protein] + ATP = O-phospho-L-threonyl-[protein] + ADP + H(+). The chain is Serine/threonine-protein kinase pdik1l-A (pdik1-a) from Xenopus laevis (African clawed frog).